The chain runs to 208 residues: MEDLDFPICILKMNLQCCEDFPSRVKKLLRQVKGVYAITIDPVKGLILVCGTAEPSVLIKAVAKLGQSPQLYAYEKDPATAKTRFRTLLKRYATNKTQDKPSPPAPPVTATTPVETCPAGGETFRGFGYPGPTTMMQMPAFSLPPPRGLPGWLAPPTNPRLKYEEPKVTPRKPPAPYPFDYYENLGFPPSDSLFNYFSDDNPQPCSIM.

The region spanning 6 to 70 (FPICILKMNL…AVAKLGQSPQ (65 aa)) is the HMA domain. Residues 93–116 (ATNKTQDKPSPPAPPVTATTPVET) are disordered. A Cysteine methyl ester modification is found at C205. C205 carries the S-farnesyl cysteine lipid modification. The propeptide at 206-208 (SIM) is removed in mature form.

Belongs to the HIPP family.

Probable heavy-metal-binding protein. This is Heavy metal-associated isoprenylated plant protein 42 from Arabidopsis thaliana (Mouse-ear cress).